A 78-amino-acid polypeptide reads, in one-letter code: Consomatin Nc1 (78 aa).

The signal sequence occupies residues 1 to 22 (MQTAYWVMVMVMVWITAPLSEG). Positions 23-59 (GKPNDVIRGLVPDDLTPQLILRSLISRRRSDKDVGKR) are excised as a propeptide. Glu61 carries the 4-carboxyglutamate modification. A disulfide bridge links Cys62 with Cys67. The residue at position 64 (Trp64) is a D-tryptophan. At Pro70 the chain carries 4-hydroxyproline. A propeptide spanning residues 71 to 78 (LSRRHDLG) is cleaved from the precursor.

The protein belongs to the conotoxin C superfamily. Consomatin family. As to expression, expressed by the venom duct.

It localises to the secreted. Moderately activates human somatostatin receptors (SSTR) with a preferential activation of SSTR1 and SSTR4. In vivo, does not cause behavioral changes in mice within a few minutes of intracranial injection, but causes a progressive loss of movement thereafter. Four to five hours after injection, mice recover, even with the highest dose tested. Shows antinociception and antihyperalgesia activities in two mouse models of acute pain, most probably by acting outside the central nervous system. The sequence is that of Consomatin Nc1 from Conus neocostatus (Cone snail).